The sequence spans 229 residues: Demethylmenaquinone methyltransferase (229 aa).

S-adenosyl-L-methionine is bound by residues T57, D77, and 101–102 (DV).

The protein belongs to the class I-like SAM-binding methyltransferase superfamily. MenG/UbiE family.

It carries out the reaction a 2-demethylmenaquinol + S-adenosyl-L-methionine = a menaquinol + S-adenosyl-L-homocysteine + H(+). Its pathway is quinol/quinone metabolism; menaquinone biosynthesis; menaquinol from 1,4-dihydroxy-2-naphthoate: step 2/2. Functionally, methyltransferase required for the conversion of demethylmenaquinol (DMKH2) to menaquinol (MKH2). This chain is Demethylmenaquinone methyltransferase, found in Chlamydia trachomatis serovar A (strain ATCC VR-571B / DSM 19440 / HAR-13).